The primary structure comprises 571 residues: Proline--tRNA ligase (571 aa).

The protein belongs to the class-II aminoacyl-tRNA synthetase family. ProS type 1 subfamily. Homodimer.

The protein localises to the cytoplasm. The catalysed reaction is tRNA(Pro) + L-proline + ATP = L-prolyl-tRNA(Pro) + AMP + diphosphate. Functionally, catalyzes the attachment of proline to tRNA(Pro) in a two-step reaction: proline is first activated by ATP to form Pro-AMP and then transferred to the acceptor end of tRNA(Pro). As ProRS can inadvertently accommodate and process non-cognate amino acids such as alanine and cysteine, to avoid such errors it has two additional distinct editing activities against alanine. One activity is designated as 'pretransfer' editing and involves the tRNA(Pro)-independent hydrolysis of activated Ala-AMP. The other activity is designated 'posttransfer' editing and involves deacylation of mischarged Ala-tRNA(Pro). The misacylated Cys-tRNA(Pro) is not edited by ProRS. In Leuconostoc citreum (strain KM20), this protein is Proline--tRNA ligase.